A 70-amino-acid chain; its full sequence is UPF0434 protein MCA0634 (70 aa).

The protein belongs to the UPF0434 family.

The protein is UPF0434 protein MCA0634 of Methylococcus capsulatus (strain ATCC 33009 / NCIMB 11132 / Bath).